A 544-amino-acid chain; its full sequence is Chaperonin GroEL (544 aa).

Residues 30–33 (TLGP), Lys51, 87–91 (DGTTT), Gly415, and Asp495 each bind ATP.

It belongs to the chaperonin (HSP60) family. As to quaternary structure, forms a cylinder of 14 subunits composed of two heptameric rings stacked back-to-back. Interacts with the co-chaperonin GroES.

The protein resides in the cytoplasm. It carries out the reaction ATP + H2O + a folded polypeptide = ADP + phosphate + an unfolded polypeptide.. In terms of biological role, together with its co-chaperonin GroES, plays an essential role in assisting protein folding. The GroEL-GroES system forms a nano-cage that allows encapsulation of the non-native substrate proteins and provides a physical environment optimized to promote and accelerate protein folding. The sequence is that of Chaperonin GroEL from Bartonella bacilliformis (strain ATCC 35685 / KC583 / Herrer 020/F12,63).